The primary structure comprises 211 residues: Middle transcription regulatory protein motA (211 aa).

A DNA-binding region (H-T-H motif) is located at residues 23 to 42 (LITIAKKDFITAAEVREVHP).

Required for the transcriptional activation of middle promoters. Middle promoters are characterized by the presence of the conserved sequence [AT]3TGCTTNA (MotA box). MotA binds directly to MotA boxes. The polypeptide is Middle transcription regulatory protein motA (motA) (Enterobacteria phage T4 (Bacteriophage T4)).